The following is a 435-amino-acid chain: Exopolysaccharide production protein ExoQ (435 aa).

10 helical membrane passes run 11–31, 35–55, 65–85, 117–137, 156–176, 178–198, 203–223, 230–250, 325–345, and 361–381; these read PGAN…VFAY, FGQV…LVDY, YLWI…SAAP, GMIA…TYHY, LGFY…VLGE, GLWM…LLTS, SVLT…ITAL, LLFI…IYAG, VVET…TAFF, and MVLF…IDIL.

It is found in the cell membrane. Its pathway is glycan metabolism; exopolysaccharide biosynthesis. In terms of biological role, involved in the production of exopolysaccharide. This is Exopolysaccharide production protein ExoQ (exoQ) from Rhizobium meliloti (strain 1021) (Ensifer meliloti).